The primary structure comprises 124 residues: Holo-[acyl-carrier-protein] synthase (124 aa).

Residues D8 and E56 each contribute to the Mg(2+) site.

Belongs to the P-Pant transferase superfamily. AcpS family. The cofactor is Mg(2+).

It is found in the cytoplasm. The catalysed reaction is apo-[ACP] + CoA = holo-[ACP] + adenosine 3',5'-bisphosphate + H(+). In terms of biological role, transfers the 4'-phosphopantetheine moiety from coenzyme A to a Ser of acyl-carrier-protein. The protein is Holo-[acyl-carrier-protein] synthase of Nitratidesulfovibrio vulgaris (strain DP4) (Desulfovibrio vulgaris).